Here is a 997-residue protein sequence, read N- to C-terminus: MLYSPLYQSIRLILFGALGLSSLTVSAAINQTDSMMPEPLVTDSSNQYADDVATDAGFNNEINNQDISYQSDSQQSAAYKKASLSSDATLSNDAAVNNNNITAINDRTKTSQDSRVAPVNTSNAAKAGNRRIDTNDESIQESLKRLAEFYELTPDTNVATSNNTGTSVNDEQNNIQNSLTPVTTNIPTVGSNLRLLPHTVDSAARCEGQWVYPKKNPNYQRAVNEASASSGQPAPNLNGLPNNQAPLFAESDYGYYDNVDYAELSGNVIIDQGTQHIEAEKIVLDLSNGVAAAQGKVMFTDQATGNVSVNGAQDRTQQNGKTSLTDKATQGGLIGVADNLNYNTETGQSTATNVAFASVELQAHGYAKRLNRPNESQYELDEVMYSTCPPTNRKWQFDAKSIDLDTETGRGEAYNTTFRIADVPVFYLPYFNFPIDSRRGSGFLLPNASISSENGLEIDVPYYFNLAPNYDATLSTHIYTTRNPMLSGEFRYLTENYGEGIFNGSYLPNDKEYDGEDRRSLFYDHYWSSTSIPRLSGEAKYSYVSDADYLNDFDTLGLSDNTLNLPRRAQLNYYNDYVDGELKVETFQTLDALNNNGQMLQDKDKPYSRLPQLKLDYRLPWAKHFDITGVSDSAYFKKSIDDGSENEKSGTRFYNKLSASYPMENSWGYIKPKLSLQHLFTTYDEDSLVDNSLDKDDGSQSVFVPQASIDAGLHFYQAGSPFGAFDDTLGGYRLLSPRLKYTYSPYRDQNDIPNFNTRIASINYEQLFSDSWFLGHDRLQDLHAFTPGINYRYIDATGVTRFDGSIGEQFYLDDGRVTLDNTKPVFTSSSSGLVWDTSTQPYNNVWVDVSGALTNSYDLNYITTELRYQPSDRSLFNVGFIKRQRDENTNQLPLSALTASAVFPINNNWRVLAQGQYDYNRNQMLDSLIGIDYEDCCFGFAVYGRRYYNDLNIAEKPTQAIMAEVRLSGLGSGSSRLTRLLADKVLGFEPVQNAWKD.

An N-terminal signal peptide occupies residues 1–27 (MLYSPLYQSIRLILFGALGLSSLTVSA).

Belongs to the LptD family. Component of the lipopolysaccharide transport and assembly complex. Interacts with LptE and LptA.

The protein resides in the cell outer membrane. Together with LptE, is involved in the assembly of lipopolysaccharide (LPS) at the surface of the outer membrane. The chain is LPS-assembly protein LptD from Psychrobacter cryohalolentis (strain ATCC BAA-1226 / DSM 17306 / VKM B-2378 / K5).